A 99-amino-acid polypeptide reads, in one-letter code: Cell division topological specificity factor (99 aa).

Belongs to the MinE family.

Its function is as follows. Prevents the cell division inhibition by proteins MinC and MinD at internal division sites while permitting inhibition at polar sites. This ensures cell division at the proper site by restricting the formation of a division septum at the midpoint of the long axis of the cell. The polypeptide is Cell division topological specificity factor (Tolumonas auensis (strain DSM 9187 / NBRC 110442 / TA 4)).